The chain runs to 369 residues: MEFEVKKTSGKARVGVLKLPHGVVRTPVFMPVGTNANVKLLTPRDLEEAGAEIVLSNTFHLMLKPGVEIIRLHGGLHKFMGWKKPILTDSGGFQVFSLPKLKIDDEGVTFKSPIDGSKVFLSPEISMEVQIALGSDICMAFDHCPPPDADYEVVKEATERTYRWALRSKEAFKTENQVLFGIVQGGVYPDLRKKSALQITSIGFDGYAIGGLSIGEERSLTLEMTEITVEYLPEDRPRYFMGGGSPELILELVDRGVDMFDSVFPTRIARHGTALTWKGRLNLKASYNKRSLDPVDEQCGCYTCKNFTRSYIHHLIDRGEVLGQILLSLHNVSFMISFMDEVRRSIEEGTFREFKGKMIDVYSSGGVSV.

Catalysis depends on D89, which acts as the Proton acceptor. Substrate-binding positions include 89–93 (DSGGF), D142, Q184, and G211. Residues 242–248 (GGGSPEL) are RNA binding. Catalysis depends on D261, which acts as the Nucleophile. The RNA binding; important for wobble base 34 recognition stretch occupies residues 266–270 (TRIAR). Positions 299, 301, 304, and 330 each coordinate Zn(2+).

Belongs to the queuine tRNA-ribosyltransferase family. As to quaternary structure, homodimer. Within each dimer, one monomer is responsible for RNA recognition and catalysis, while the other monomer binds to the replacement base PreQ1. Requires Zn(2+) as cofactor.

It carries out the reaction 7-aminomethyl-7-carbaguanine + guanosine(34) in tRNA = 7-aminomethyl-7-carbaguanosine(34) in tRNA + guanine. Its pathway is tRNA modification; tRNA-queuosine biosynthesis. Catalyzes the base-exchange of a guanine (G) residue with the queuine precursor 7-aminomethyl-7-deazaguanine (PreQ1) at position 34 (anticodon wobble position) in tRNAs with GU(N) anticodons (tRNA-Asp, -Asn, -His and -Tyr). Catalysis occurs through a double-displacement mechanism. The nucleophile active site attacks the C1' of nucleotide 34 to detach the guanine base from the RNA, forming a covalent enzyme-RNA intermediate. The proton acceptor active site deprotonates the incoming PreQ1, allowing a nucleophilic attack on the C1' of the ribose to form the product. After dissociation, two additional enzymatic reactions on the tRNA convert PreQ1 to queuine (Q), resulting in the hypermodified nucleoside queuosine (7-(((4,5-cis-dihydroxy-2-cyclopenten-1-yl)amino)methyl)-7-deazaguanosine). The polypeptide is Queuine tRNA-ribosyltransferase (Thermotoga neapolitana (strain ATCC 49049 / DSM 4359 / NBRC 107923 / NS-E)).